A 126-amino-acid chain; its full sequence is MQRTMLKSKLHRVHVTHSELDYEGSCAIDEALLEAADIKEYQQIDIYNVNNGERFTTYAIRAERNSGIISVNGAAARKASPGDLLIIATYASYTEAELAQFKPQLVYVDADNRIKNQRQHIPVQAA.

The active-site Schiff-base intermediate with substrate; via pyruvic acid is the Ser25. The residue at position 25 (Ser25) is a Pyruvic acid (Ser). Thr57 provides a ligand contact to substrate. Tyr58 serves as the catalytic Proton donor. Residue Gly73–Ala75 participates in substrate binding.

It belongs to the PanD family. As to quaternary structure, heterooctamer of four alpha and four beta subunits. It depends on pyruvate as a cofactor. In terms of processing, is synthesized initially as an inactive proenzyme, which is activated by self-cleavage at a specific serine bond to produce a beta-subunit with a hydroxyl group at its C-terminus and an alpha-subunit with a pyruvoyl group at its N-terminus.

It is found in the cytoplasm. It carries out the reaction L-aspartate + H(+) = beta-alanine + CO2. It participates in cofactor biosynthesis; (R)-pantothenate biosynthesis; beta-alanine from L-aspartate: step 1/1. In terms of biological role, catalyzes the pyruvoyl-dependent decarboxylation of aspartate to produce beta-alanine. This chain is Aspartate 1-decarboxylase, found in Methylobacillus flagellatus (strain ATCC 51484 / DSM 6875 / VKM B-1610 / KT).